Reading from the N-terminus, the 437-residue chain is GTPase Obg (437 aa).

The Obg domain maps to 2 to 161 (SDFIDRALIT…RELQLELKVI (160 aa)). The 174-residue stretch at 162–335 (ADVGLVGFPN…LQRRIVDILR (174 aa)) folds into the OBG-type G domain. GTP is bound by residues 168–175 (GFPNAGKS), 193–197 (FTTLS), 214–217 (DIPG), 284–287 (NKTD), and 316–318 (SAA). Residues Ser-175 and Thr-195 each coordinate Mg(2+). The region spanning 355-433 (FSNIDPNDFW…IEKAELLWQD (79 aa)) is the OCT domain.

This sequence belongs to the TRAFAC class OBG-HflX-like GTPase superfamily. OBG GTPase family. In terms of assembly, monomer. Mg(2+) serves as cofactor.

Its subcellular location is the cytoplasm. Its function is as follows. An essential GTPase which binds GTP, GDP and possibly (p)ppGpp with moderate affinity, with high nucleotide exchange rates and a fairly low GTP hydrolysis rate. Plays a role in control of the cell cycle, stress response, ribosome biogenesis and in those bacteria that undergo differentiation, in morphogenesis control. The protein is GTPase Obg of Herpetosiphon aurantiacus (strain ATCC 23779 / DSM 785 / 114-95).